Reading from the N-terminus, the 475-residue chain is tRNA modification GTPase MnmE (475 aa).

Positions 24, 81, and 124 each coordinate (6S)-5-formyl-5,6,7,8-tetrahydrofolate. The region spanning 220–397 is the TrmE-type G domain; the sequence is GLSVVLAGQP…LRKELLRLVG (178 aa). Residue asparagine 230 participates in K(+) binding. Residues 230-235, 249-255, 274-277, and 378-380 each bind GTP; these read NVGKSS, TPIAGTT, DTAG, and SAR. Serine 234 contacts Mg(2+). Residues threonine 249, isoleucine 251, and threonine 254 each contribute to the K(+) site. Threonine 255 contributes to the Mg(2+) binding site. Lysine 475 serves as a coordination point for (6S)-5-formyl-5,6,7,8-tetrahydrofolate.

Belongs to the TRAFAC class TrmE-Era-EngA-EngB-Septin-like GTPase superfamily. TrmE GTPase family. In terms of assembly, homodimer. Heterotetramer of two MnmE and two MnmG subunits. Requires K(+) as cofactor.

It localises to the cytoplasm. Functionally, exhibits a very high intrinsic GTPase hydrolysis rate. Involved in the addition of a carboxymethylaminomethyl (cmnm) group at the wobble position (U34) of certain tRNAs, forming tRNA-cmnm(5)s(2)U34. The sequence is that of tRNA modification GTPase MnmE from Cupriavidus pinatubonensis (strain JMP 134 / LMG 1197) (Cupriavidus necator (strain JMP 134)).